The primary structure comprises 503 residues: 4-trimethylaminobutyraldehyde dehydrogenase (503 aa).

NAD(+) contacts are provided by residues Lys-189 and 241–245 (GSVPT). Glu-263 (proton acceptor) is an active-site residue. The active-site Nucleophile is the Cys-297. Glu-400 contacts NAD(+).

Belongs to the aldehyde dehydrogenase family. Homotetramer.

It is found in the cytoplasm. The protein localises to the cytosol. The catalysed reaction is 4-(trimethylamino)butanal + NAD(+) + H2O = 4-(trimethylamino)butanoate + NADH + 2 H(+). It catalyses the reaction an aldehyde + NAD(+) + H2O = a carboxylate + NADH + 2 H(+). Its pathway is amine and polyamine biosynthesis; carnitine biosynthesis. Its function is as follows. Converts gamma-trimethylaminobutyraldehyde into gamma-butyrobetaine with high efficiency (in vitro). Can catalyze the irreversible oxidation of a broad range of aldehydes to the corresponding acids in an NAD-dependent reaction, but with low efficiency. This chain is 4-trimethylaminobutyraldehyde dehydrogenase (aldh9A1), found in Gadus morhua subsp. callarias (Baltic cod).